We begin with the raw amino-acid sequence, 1275 residues long: Inner capsid protein lambda-1 (1275 aa).

Residues 1-12 (MKRIPRKTRGKS) show a composition bias toward basic residues. A disordered region spans residues 1–147 (MKRIPRKTRG…NVDNEGGDNQ (147 aa)). Residues 18 to 35 (DSTERADDGSAQLRDKQS) are compositionally biased toward basic and acidic residues. Over residues 55–66 (TRPSLQTVQKAT) the composition is skewed to polar residues. Composition is skewed to basic and acidic residues over residues 80–98 (AVDK…HVEA) and 105–117 (ATKR…DKQK). The span at 118-139 (AQVTYNDTGINNANELSRSGNV) shows a compositional bias: polar residues. A C2H2-type zinc finger spans residues 181-203 (YQCHVCSAVLFSPLDLDAHVASH).

This sequence belongs to the turreted BTV-fold inner capsid family. As to quaternary structure, homodecamer; each decamer is made up of two conformers of VP2, called VP2A and VP2B. 12 homodecamers assemble to form an icosahedral capsid. Interacts with protein mu-NS; in viral inclusions. Mg(2+) serves as cofactor. Mn(2+) is required as a cofactor.

The protein localises to the virion. It carries out the reaction ATP + H2O = ADP + phosphate + H(+). Its function is as follows. Inner capsid protein that self-assembles to form an icosahedral capsid with a T=2 symmetry, which consists of 120 copies of VP2, with channels at each of its five-fold vertices. This capsid constitutes the innermost concentric layer of the viral mature particle. Functionally, displays NTPase, RNA 5'-triphosphatase (RTPase) and RNA helicase activities and probably participates in transcription of the viral genome. Helicase activity might be involved in unwinding or reannealing dsRNA during RNA synthesis. RTPase enzymatic activity represents the first step in RNA capping, which yields a 5'-diphosphorylated plus-strand RNA. The sequence is that of Inner capsid protein lambda-1 from Reovirus type 2 (strain D5/Jones) (T2J).